We begin with the raw amino-acid sequence, 304 residues long: Recombination-associated protein RdgC (304 aa).

The protein belongs to the RdgC family.

It localises to the cytoplasm. It is found in the nucleoid. Its function is as follows. May be involved in recombination. The sequence is that of Recombination-associated protein RdgC from Paraburkholderia phymatum (strain DSM 17167 / CIP 108236 / LMG 21445 / STM815) (Burkholderia phymatum).